The following is a 465-amino-acid chain: Argininosuccinate lyase (465 aa).

Belongs to the lyase 1 family. Argininosuccinate lyase subfamily.

It is found in the cytoplasm. It catalyses the reaction 2-(N(omega)-L-arginino)succinate = fumarate + L-arginine. The protein operates within amino-acid biosynthesis; L-arginine biosynthesis; L-arginine from L-ornithine and carbamoyl phosphate: step 3/3. This is Argininosuccinate lyase from Variovorax paradoxus (strain S110).